The chain runs to 2157 residues: Unconventional myosin-IXb (2157 aa).

Serine 2 is subject to N-acetylserine. Positions 15 to 114 (AAYHLHIYPQ…YYFLLQERNA (100 aa)) constitute a Ras-associating domain. The Myosin motor domain maps to 146 to 953 (ADFDDLCNLP…ERQALQETLH (808 aa)). ATP is bound at residue 239-246 (GESGSGKT). The interval 709-734 (AEKAAGMSSPGAQSHPEELPRGASTP) is disordered. 2 positions are modified to phosphoserine: serine 716 and serine 717. An actin-binding region spans residues 844-855 (KAEPFFIRCIRS). The interval 940-1044 (LKETERQALQ…CRGHLQRKSF (105 aa)) is neck or regulatory domain. IQ domains are found at residues 957-977 (VRKI…RHFL), 979-1000 (MKRA…RALE), 1001-1023 (RTQA…LYRH), and 1024-1053 (QKQS…EKQK). Residue serine 1045 is modified to Phosphoserine. Positions 1045-2157 (SQMISEKQKA…LPPASGQTNG (1113 aa)) are tail. Residues 1046-1071 (QMISEKQKAEEKEREALEAARAGAEE) adopt a coiled-coil conformation. Disordered regions lie at residues 1046 to 1298 (QMIS…TQIQ), 1320 to 1410 (AAAS…GSQV), and 1455 to 1484 (GLEA…KKNR). Composition is skewed to basic and acidic residues over residues 1050–1063 (EKQK…EALE), 1109–1122 (SPLE…EAPS), 1136–1160 (ESHE…EHVK), 1168–1183 (SCKE…RRVT), and 1191–1201 (LEDKKESREDE). Residues serine 1114, serine 1115, and serine 1122 each carry the phosphoserine modification. The span at 1211–1222 (ENTSQKQPTEQP) shows a compositional bias: polar residues. Phosphoserine is present on residues serine 1242, serine 1253, serine 1261, and serine 1267. At threonine 1271 the chain carries Phosphothreonine. 3 positions are modified to phosphoserine: serine 1290, serine 1323, and serine 1331. Threonine 1346 carries the post-translational modification Phosphothreonine. Serine 1354, serine 1356, and serine 1405 each carry phosphoserine. Over residues 1467 to 1478 (AAGEKRTKEPGG) the composition is skewed to basic and acidic residues. Residues 1632 to 1681 (GHVFASYQVSIPQSCEQCLSYIWLMDKALLCSVCKMTCHKKCVHKIQSHC) form a Phorbol-ester/DAG-type zinc finger. The region spanning 1703-1888 (DSLTSDKASV…MLIKEQMRKY (186 aa)) is the Rho-GAP domain. The tract at residues 1739–1744 (AANRTR) is interaction with RHOA. The stretch at 1880–1901 (LIKEQMRKYKVKMEEISQLEAA) forms a coiled coil. A phosphoserine mark is found at serine 1926, serine 1972, serine 1992, and serine 1999. A coiled-coil region spans residues 1959 to 1989 (EDREKEILIERIQSIKEEKEDITYRLPELDP). The segment covering 1980-1993 (ITYRLPELDPRGSD) has biased composition (basic and acidic residues). A disordered region spans residues 1980–2157 (ITYRLPELDP…LPPASGQTNG (178 aa)). Residue threonine 2005 is modified to Phosphothreonine. Residues 2021–2037 (PPAPALPCPGAPTPSPL) show a composition bias toward pro residues. Serine 2050 bears the Phosphoserine mark. Low complexity predominate over residues 2081 to 2093 (PRWAPGAREAAAP). A compositionally biased stretch (basic and acidic residues) spans 2095–2106 (RRREPPARRPDQ). Phosphoserine is present on serine 2141.

It belongs to the TRAFAC class myosin-kinesin ATPase superfamily. Myosin family. As to quaternary structure, interacts (via IQ domains) with CALM. Interacts with RHOA. Interacts (via Rho-GAP domain) with ROBO1; this inhibits the interaction with RHOA and the stimulation of RHOA GTPase activity, and thereby increases the levels of active RHOA. As to expression, detected in peripheral blood leukocytes (at protein level). Expressed predominantly in peripheral blood leukocytes and at lower levels, in thymus, spleen, testis, prostate, ovary, brain, small intestine and lung.

The protein localises to the cytoplasm. The protein resides in the cell cortex. It localises to the perinuclear region. Its subcellular location is the cytoskeleton. Functionally, myosins are actin-based motor molecules with ATPase activity. Unconventional myosins serve in intracellular movements. Binds actin with high affinity both in the absence and presence of ATP and its mechanochemical activity is inhibited by calcium ions. Also acts as a GTPase activator for RHOA. Plays a role in the regulation of cell migration via its role as RHOA GTPase activator. This is regulated by its interaction with the SLIT2 receptor ROBO1; interaction with ROBO1 impairs interaction with RHOA and subsequent activation of RHOA GTPase activity, and thereby leads to increased levels of active, GTP-bound RHOA. The protein is Unconventional myosin-IXb (MYO9B) of Homo sapiens (Human).